The primary structure comprises 87 residues: Mu-conotoxin cal12b (87 aa).

The first 19 residues, 1-19 (MKLTCVLVVLLLLLPYGDL), serve as a signal peptide directing secretion. The propeptide occupies 20-42 (ITNNYIRGAARKVTPWRRNLKTR). 4 disulfides stabilise this stretch: C45–C58, C53–C70, C60–C75, and C69–C81. W59 carries the 6'-bromotryptophan modification. At P65 the chain carries 4-hydroxyproline. Residues W79 and W80 each carry the 6'-bromotryptophan modification. Position 82 is a 4-hydroxyproline (P82). W86 is modified (6'-bromotryptophan).

Expressed by the venom duct.

It is found in the secreted. In terms of biological role, mu-conotoxins block voltage-gated sodium channels. This toxin reversibly blocks voltage-gated sodium channel in cephalopods (tested on squid giant-fiber-lobe neurons) with an inhibitor constant (Ki) of 15 nmol/l, with no alteration in the voltage dependence of sodium conductance or on the kinetics of inactivation. Has no effect on sodium channels of the two gastropod S.luhuanus and A.californica (which are not natural prey). In Californiconus californicus (California cone), this protein is Mu-conotoxin cal12b.